We begin with the raw amino-acid sequence, 191 residues long: Small ribosomal subunit protein uS7 (191 aa).

The protein belongs to the universal ribosomal protein uS7 family. As to quaternary structure, part of the 30S ribosomal subunit.

Functionally, one of the primary rRNA binding proteins, it binds directly to 16S rRNA where it nucleates assembly of the head domain of the 30S subunit. Is located at the subunit interface close to the decoding center. In Methanocaldococcus jannaschii (strain ATCC 43067 / DSM 2661 / JAL-1 / JCM 10045 / NBRC 100440) (Methanococcus jannaschii), this protein is Small ribosomal subunit protein uS7.